The following is a 201-amino-acid chain: Small ribosomal subunit protein uS4c (201 aa).

The S4 RNA-binding domain maps to 89–150 (MRLDNILFRL…KERSKALIQN (62 aa)).

This sequence belongs to the universal ribosomal protein uS4 family. Part of the 30S ribosomal subunit. Contacts protein S5. The interaction surface between S4 and S5 is involved in control of translational fidelity.

It is found in the plastid. The protein resides in the chloroplast. Functionally, one of the primary rRNA binding proteins, it binds directly to 16S rRNA where it nucleates assembly of the body of the 30S subunit. In terms of biological role, with S5 and S12 plays an important role in translational accuracy. This chain is Small ribosomal subunit protein uS4c (rps4), found in Phalaenopsis aphrodite subsp. formosana (Moth orchid).